Reading from the N-terminus, the 695-residue chain is C6 finger domain transcription factor nscR (695 aa).

Residues 17–43 (CELCRERKVKCDKLDPCTNCASAGVVC) constitute a DNA-binding region (zn(2)-C6 fungal-type). Over residues 101 to 113 (SMRSSASQSSNQD) the composition is skewed to low complexity. Residues 101 to 146 (SMRSSASQSSNQDQESRDAIESISNETEDASAPTPDSSRMPLGDGG) form a disordered region.

It localises to the nucleus. In terms of biological role, transcription factor that specifically regulates the neosartoricin B biosynthesis gene cluster. This chain is C6 finger domain transcription factor nscR, found in Arthroderma otae (strain ATCC MYA-4605 / CBS 113480) (Microsporum canis).